Here is a 197-residue protein sequence, read N- to C-terminus: Chalcone--flavanone isomerase 2 (197 aa).

Residues T23, N88, and T165 each contribute to the substrate site.

It belongs to the chalcone isomerase family.

The catalysed reaction is a chalcone = a flavanone.. It participates in secondary metabolite biosynthesis; flavonoid biosynthesis. Functionally, catalyzes the intramolecular cyclization of bicyclic chalcones into tricyclic (S)-flavanones. Responsible for the isomerization of 4,2',4',6'-tetrahydroxychalcone (also termed chalcone) into naringenin. The chain is Chalcone--flavanone isomerase 2 (CHI2) from Medicago sativa (Alfalfa).